A 181-amino-acid polypeptide reads, in one-letter code: Oligoribonuclease (181 aa).

Residues 8 to 171 (LIWIDLEMTG…DDIRESIAEL (164 aa)) enclose the Exonuclease domain. The active site involves tyrosine 129.

It belongs to the oligoribonuclease family.

It is found in the cytoplasm. 3'-to-5' exoribonuclease specific for small oligoribonucleotides. In Alcanivorax borkumensis (strain ATCC 700651 / DSM 11573 / NCIMB 13689 / SK2), this protein is Oligoribonuclease.